We begin with the raw amino-acid sequence, 474 residues long: Neuronal acetylcholine receptor subunit eat-2 (474 aa).

Residues 1–21 (MTLKIAFFTLILLVSIERVYS) form the signal peptide. Over 22-237 (SDEEYRLLKD…MHLKRRTMYY (216 aa)) the chain is Extracellular. An N-linked (GlcNAc...) asparagine glycan is attached at Asn-95. Cysteines 149 and 163 form a disulfide. 3 helical membrane passes run 238–258 (GLNW…GFTM), 266–286 (ITLQ…VSEV), and 303–323 (LSIV…NIFF). At 324-440 (RHPKTHRMGD…WRFMAMVIDR (117 aa)) the chain is on the cytoplasmic side. The interval 359–378 (PRREEEKNDEEAGGDGTKLL) is disordered. A helical membrane pass occupies residues 441–461 (LSLFLFTGLIFGTTALIFAFC).

It belongs to the ligand-gated ion channel (TC 1.A.9) family. Acetylcholine receptor (TC 1.A.9.1) subfamily. As to quaternary structure, neuronal AChR seems to be composed of two different type of subunits: alpha and beta. Expressed in pharyngeal muscle.

It is found in the postsynaptic cell membrane. It localises to the cell membrane. After binding acetylcholine, the AChR responds by an extensive change in conformation that affects all subunits and leads to opening of an ion-conducting channel across the plasma membrane. Nicotinic acetylcholine receptor in the MC pharyngeal motor neuron involved in pharyngeal pumping. Has a role in the determination of life span possibly via calorific restriction which affects growth rate, although this is independent of metabolic activity. Plays a role in the defense against the accumulation of ingested live pathogenic bacteria in the intestine. This chain is Neuronal acetylcholine receptor subunit eat-2, found in Caenorhabditis elegans.